A 379-amino-acid polypeptide reads, in one-letter code: Cytochrome b (379 aa).

Helical transmembrane passes span 33–53 (LGSL…FLAM), 77–98 (WTIR…YLHI), 113–133 (WNTG…GYVL), and 178–198 (FFTL…THLL). Heme b-binding residues include His83 and His97. Heme b is bound by residues His182 and His196. His201 is an a ubiquinone binding site. A run of 4 helical transmembrane segments spans residues 226 to 246 (IKDI…TLLH), 288 to 308 (LGGV…PMTH), 320 to 340 (ISQC…WIGG), and 347 to 367 (FTTI…ILTP).

Belongs to the cytochrome b family. The cytochrome bc1 complex contains 11 subunits: 3 respiratory subunits (MT-CYB, CYC1 and UQCRFS1), 2 core proteins (UQCRC1 and UQCRC2) and 6 low-molecular weight proteins (UQCRH/QCR6, UQCRB/QCR7, UQCRQ/QCR8, UQCR10/QCR9, UQCR11/QCR10 and a cleavage product of UQCRFS1). This cytochrome bc1 complex then forms a dimer. Requires heme b as cofactor.

Its subcellular location is the mitochondrion inner membrane. Functionally, component of the ubiquinol-cytochrome c reductase complex (complex III or cytochrome b-c1 complex) that is part of the mitochondrial respiratory chain. The b-c1 complex mediates electron transfer from ubiquinol to cytochrome c. Contributes to the generation of a proton gradient across the mitochondrial membrane that is then used for ATP synthesis. The protein is Cytochrome b (MT-CYB) of Bradypus tridactylus (Pale-throated three-toed sloth).